Here is a 460-residue protein sequence, read N- to C-terminus: UDP-N-acetylmuramoylalanine--D-glutamate ligase (460 aa).

117–123 (GTNGKTT) is a binding site for ATP.

Belongs to the MurCDEF family.

The protein localises to the cytoplasm. It carries out the reaction UDP-N-acetyl-alpha-D-muramoyl-L-alanine + D-glutamate + ATP = UDP-N-acetyl-alpha-D-muramoyl-L-alanyl-D-glutamate + ADP + phosphate + H(+). The protein operates within cell wall biogenesis; peptidoglycan biosynthesis. In terms of biological role, cell wall formation. Catalyzes the addition of glutamate to the nucleotide precursor UDP-N-acetylmuramoyl-L-alanine (UMA). The protein is UDP-N-acetylmuramoylalanine--D-glutamate ligase of Prochlorococcus marinus (strain MIT 9313).